The following is a 269-amino-acid chain: tRNA pseudouridine synthase A (269 aa).

The active-site Nucleophile is aspartate 51. Tyrosine 109 contacts substrate.

The protein belongs to the tRNA pseudouridine synthase TruA family. In terms of assembly, homodimer.

It carries out the reaction uridine(38/39/40) in tRNA = pseudouridine(38/39/40) in tRNA. Functionally, formation of pseudouridine at positions 38, 39 and 40 in the anticodon stem and loop of transfer RNAs. This is tRNA pseudouridine synthase A from Histophilus somni (strain 129Pt) (Haemophilus somnus).